Here is a 579-residue protein sequence, read N- to C-terminus: Putative fatty-acid--CoA ligase fadD21 (579 aa).

It belongs to the ATP-dependent AMP-binding enzyme family.

The protein is Putative fatty-acid--CoA ligase fadD21 (fadD21) of Mycobacterium leprae (strain TN).